We begin with the raw amino-acid sequence, 259 residues long: UPF0014 membrane protein slr1647 (259 aa).

7 consecutive transmembrane segments (helical) span residues 4 to 24, 34 to 54, 55 to 75, 98 to 118, 128 to 148, 195 to 215, and 225 to 245; these read ALIELDWADIGWMLGLLGAAI, LTGQLLWAGGRTILQLIVVGY, FLAVVFSLDNPWAVLLVLAIM, LWLSLGASTAISLGYALVVII, YLIPLTGMILGQTMNSASLAG, MMVVGLVSLPGMLTGQVLAGG, and ILIMFLILLTNTLSTIAVTAT.

This sequence belongs to the UPF0014 family.

Its subcellular location is the cell membrane. The sequence is that of UPF0014 membrane protein slr1647 from Synechocystis sp. (strain ATCC 27184 / PCC 6803 / Kazusa).